We begin with the raw amino-acid sequence, 127 residues long: ALK and LTK ligand 1 (127 aa).

The signal sequence occupies residues 1-27 (MWLTKPSTPVSALLLLALALSPPGTQG). Intrachain disulfides connect Cys-88–Cys-124 and Cys-102–Cys-111.

The protein belongs to the ALKAL family.

The protein resides in the secreted. The protein localises to the cell membrane. Cytokine that acts as a physiological ligand for receptor tyrosine kinase LTK, leading to its activation. Monomeric ALKAL1 binds to LTK, leading to LTK homodimerization and activation. In contrast to ALKAL2, does not act as a potent physiological ligand for ALK. The protein is ALK and LTK ligand 1 of Mus musculus (Mouse).